The sequence spans 645 residues: Glucans biosynthesis glucosyltransferase H (645 aa).

A compositionally biased stretch (polar residues) spans 1 to 12 (MDGTVTLSSTPT). Residues 1-22 (MDGTVTLSSTPTAIPPVSALDA) are disordered. Transmembrane regions (helical) follow at residues 64–84 (LIGG…SVLW), 98–118 (LFTL…AGFV), 423–443 (APMW…GVGI), 465–485 (AIWI…LGYI), 504–524 (AVSI…VMYL), 559–579 (YGGL…VSPA), and 580–600 (LAAW…VVAL).

Belongs to the glycosyltransferase 2 family. OpgH subfamily.

Its subcellular location is the cell inner membrane. It participates in glycan metabolism; osmoregulated periplasmic glucan (OPG) biosynthesis. Its function is as follows. Involved in the biosynthesis of osmoregulated periplasmic glucans (OPGs). The sequence is that of Glucans biosynthesis glucosyltransferase H from Xanthomonas oryzae pv. oryzae (strain MAFF 311018).